Consider the following 333-residue polypeptide: Fructose-1,6-bisphosphatase class 1 1 (333 aa).

The Mg(2+) site is built by glutamate 81, aspartate 100, leucine 102, and aspartate 103. Substrate is bound by residues 103–106 and asparagine 191; that span reads DGSS. Glutamate 263 is a Mg(2+) binding site.

Belongs to the FBPase class 1 family. As to quaternary structure, homotetramer. Mg(2+) is required as a cofactor.

The protein resides in the cytoplasm. The catalysed reaction is beta-D-fructose 1,6-bisphosphate + H2O = beta-D-fructose 6-phosphate + phosphate. It functions in the pathway carbohydrate biosynthesis; gluconeogenesis. Its activity is regulated as follows. Fructose-1,6-bisphosphatase II is not light-activated. This is Fructose-1,6-bisphosphatase class 1 1 from Cereibacter sphaeroides (Rhodobacter sphaeroides).